Here is a 464-residue protein sequence, read N- to C-terminus: Glycine--tRNA ligase (464 aa).

2 residues coordinate substrate: R104 and E175. Residues 207 to 209 (RNE), 217 to 222 (FRTREF), 292 to 293 (EL), and 336 to 339 (GVNR) each bind ATP. 222–226 (FEQME) lines the substrate pocket. 332–336 (EPALG) is a substrate binding site.

Belongs to the class-II aminoacyl-tRNA synthetase family. As to quaternary structure, homodimer.

It is found in the cytoplasm. It carries out the reaction tRNA(Gly) + glycine + ATP = glycyl-tRNA(Gly) + AMP + diphosphate. Its function is as follows. Catalyzes the attachment of glycine to tRNA(Gly). The chain is Glycine--tRNA ligase from Leptospira borgpetersenii serovar Hardjo-bovis (strain JB197).